A 474-amino-acid chain; its full sequence is Trichothecene 3-O-acetyltransferase (474 aa).

This sequence belongs to the trichothecene 3-O-acetyltransferase family.

In terms of biological role, trichothecene 3-O-acetyltransferase involved in self-protection against trichothecenes, mycotoxins acting as eukaryotic protein synthesis inhibitors. Its existence is surprising in a non-trichothecene producer organism which needs no self-protection again endogenic trichothecenes. The persistence of this non-essential gene may be due to a selective advantage that it may confer, like a resistance to exogenic trichothecenes. The sequence is that of Trichothecene 3-O-acetyltransferase (AYT1) from Saccharomyces cerevisiae (strain ATCC 204508 / S288c) (Baker's yeast).